Reading from the N-terminus, the 105-residue chain is Heat shock protein HspQ (105 aa).

The interval glycine 75–asparagine 105 is disordered.

Belongs to the HspQ family.

The protein localises to the cytoplasm. Functionally, involved in the degradation of certain denaturated proteins, including DnaA, during heat shock stress. This Serratia proteamaculans (strain 568) protein is Heat shock protein HspQ.